A 1322-amino-acid chain; its full sequence is Putative DNA ligase 4 (1322 aa).

ATP-binding residues include glutamate 265, lysine 267, arginine 272, arginine 287, glutamate 317, phenylalanine 387, glutamate 497, lysine 502, arginine 513, lysine 519, and lysine 521. The active-site N6-AMP-lysine intermediate is lysine 267. Residue glutamate 317 participates in Mg(2+) binding. Residue glutamate 497 coordinates Mg(2+). 2 BRCT domains span residues 686-768 (LDVQ…PKFD) and 825-935 (ERFC…TYSL). Disordered regions lie at residues 945-1212 (IERS…SATC) and 1245-1310 (AEAK…KKVS). A compositionally biased stretch (basic and acidic residues) spans 957–969 (DKLEENEKADTSH). Composition is skewed to basic residues over residues 970 to 979 (VKHAPRKRGR) and 994 to 1005 (PVRRTRARRGNQ). 2 stretches are compositionally biased toward basic and acidic residues: residues 1007–1022 (AKIDDVEPEESDHGET) and 1033–1047 (NISKMEVDSFDKDQV). The segment covering 1051 to 1063 (PVRRTRARRGKQH) has biased composition (basic residues). Composition is skewed to basic and acidic residues over residues 1082–1104 (DDQRLDADYISKMEEDSSDRDQG), 1125–1161 (AKIDRETGPGETGQDDKKLNADSISKMEEHAHDKDQE), and 1190–1204 (PKHERNQTVLRRDTA). Over residues 1261–1288 (SSYVAPVPQASASSASSSGVPAPHAGSS) the composition is skewed to low complexity.

It belongs to the ATP-dependent DNA ligase family. Mg(2+) serves as cofactor.

The protein localises to the nucleus. It carries out the reaction ATP + (deoxyribonucleotide)n-3'-hydroxyl + 5'-phospho-(deoxyribonucleotide)m = (deoxyribonucleotide)n+m + AMP + diphosphate.. Its function is as follows. DNA ligase involved in DNA non-homologous end joining (NHEJ); required for double-strand break (DSB) repair. The chain is Putative DNA ligase 4 (LIG4) from Oryza sativa subsp. japonica (Rice).